The chain runs to 104 residues: ATP-dependent Clp protease adapter protein ClpS (104 aa).

It belongs to the ClpS family. Binds to the N-terminal domain of the chaperone ClpA.

Functionally, involved in the modulation of the specificity of the ClpAP-mediated ATP-dependent protein degradation. In Desulforapulum autotrophicum (strain ATCC 43914 / DSM 3382 / VKM B-1955 / HRM2) (Desulfobacterium autotrophicum), this protein is ATP-dependent Clp protease adapter protein ClpS.